The chain runs to 291 residues: N-acetylmannosamine kinase (291 aa).

ATP contacts are provided by residues 5 to 12 and 132 to 139; these read AIDIGGTK and GVGGGVVS. Residues His-156, Cys-166, Cys-168, and Cys-173 each coordinate Zn(2+).

It belongs to the ROK (NagC/XylR) family. NanK subfamily. In terms of assembly, homodimer.

The enzyme catalyses an N-acyl-D-mannosamine + ATP = an N-acyl-D-mannosamine 6-phosphate + ADP + H(+). It functions in the pathway amino-sugar metabolism; N-acetylneuraminate degradation; D-fructose 6-phosphate from N-acetylneuraminate: step 2/5. Functionally, catalyzes the phosphorylation of N-acetylmannosamine (ManNAc) to ManNAc-6-P. This Escherichia coli O127:H6 (strain E2348/69 / EPEC) protein is N-acetylmannosamine kinase.